Consider the following 144-residue polypeptide: 3-hydroxyacyl-[acyl-carrier-protein] dehydratase FabZ (144 aa).

Residue His48 is part of the active site.

Belongs to the thioester dehydratase family. FabZ subfamily.

The protein localises to the cytoplasm. It catalyses the reaction a (3R)-hydroxyacyl-[ACP] = a (2E)-enoyl-[ACP] + H2O. Its function is as follows. Involved in unsaturated fatty acids biosynthesis. Catalyzes the dehydration of short chain beta-hydroxyacyl-ACPs and long chain saturated and unsaturated beta-hydroxyacyl-ACPs. This Listeria welshimeri serovar 6b (strain ATCC 35897 / DSM 20650 / CCUG 15529 / CIP 8149 / NCTC 11857 / SLCC 5334 / V8) protein is 3-hydroxyacyl-[acyl-carrier-protein] dehydratase FabZ.